The chain runs to 436 residues: Trigger factor (436 aa).

Positions 163-248 (DDRIVLDFAG…VKEVAEAVLP (86 aa)) constitute a PPIase FKBP-type domain.

The protein belongs to the FKBP-type PPIase family. Tig subfamily.

It localises to the cytoplasm. It carries out the reaction [protein]-peptidylproline (omega=180) = [protein]-peptidylproline (omega=0). Its function is as follows. Involved in protein export. Acts as a chaperone by maintaining the newly synthesized protein in an open conformation. Functions as a peptidyl-prolyl cis-trans isomerase. The sequence is that of Trigger factor from Bordetella avium (strain 197N).